Consider the following 338-residue polypeptide: Anthranilate phosphoribosyltransferase (338 aa).

Residues G81, 84 to 85 (GD), S89, 91 to 94 (NVST), 109 to 117 (KHGNRALSS), and A121 each bind 5-phospho-alpha-D-ribose 1-diphosphate. G81 serves as a coordination point for anthranilate. Position 93 (S93) interacts with Mg(2+). N112 is a binding site for anthranilate. R167 provides a ligand contact to anthranilate. Residues D226 and E227 each contribute to the Mg(2+) site.

It belongs to the anthranilate phosphoribosyltransferase family. Homodimer. Requires Mg(2+) as cofactor.

It carries out the reaction N-(5-phospho-beta-D-ribosyl)anthranilate + diphosphate = 5-phospho-alpha-D-ribose 1-diphosphate + anthranilate. The protein operates within amino-acid biosynthesis; L-tryptophan biosynthesis; L-tryptophan from chorismate: step 2/5. Catalyzes the transfer of the phosphoribosyl group of 5-phosphorylribose-1-pyrophosphate (PRPP) to anthranilate to yield N-(5'-phosphoribosyl)-anthranilate (PRA). This chain is Anthranilate phosphoribosyltransferase, found in Rhodopseudomonas palustris (strain BisB5).